The following is a 521-amino-acid chain: Bifunctional purine biosynthesis protein PurH (521 aa).

In terms of domain architecture, MGS-like spans 1-145; sequence MIKQALISVS…KNHRDVTVVV (145 aa).

The protein belongs to the PurH family.

It catalyses the reaction (6R)-10-formyltetrahydrofolate + 5-amino-1-(5-phospho-beta-D-ribosyl)imidazole-4-carboxamide = 5-formamido-1-(5-phospho-D-ribosyl)imidazole-4-carboxamide + (6S)-5,6,7,8-tetrahydrofolate. It carries out the reaction IMP + H2O = 5-formamido-1-(5-phospho-D-ribosyl)imidazole-4-carboxamide. It functions in the pathway purine metabolism; IMP biosynthesis via de novo pathway; 5-formamido-1-(5-phospho-D-ribosyl)imidazole-4-carboxamide from 5-amino-1-(5-phospho-D-ribosyl)imidazole-4-carboxamide (10-formyl THF route): step 1/1. The protein operates within purine metabolism; IMP biosynthesis via de novo pathway; IMP from 5-formamido-1-(5-phospho-D-ribosyl)imidazole-4-carboxamide: step 1/1. The protein is Bifunctional purine biosynthesis protein PurH of Burkholderia orbicola (strain MC0-3).